The chain runs to 292 residues: 1D-myo-inositol 2-acetamido-2-deoxy-alpha-D-glucopyranoside deacetylase (292 aa).

Zn(2+) contacts are provided by His11, Asp14, and His146.

Belongs to the MshB deacetylase family. Zn(2+) serves as cofactor.

It carries out the reaction 1D-myo-inositol 2-acetamido-2-deoxy-alpha-D-glucopyranoside + H2O = 1D-myo-inositol 2-amino-2-deoxy-alpha-D-glucopyranoside + acetate. In terms of biological role, catalyzes the deacetylation of 1D-myo-inositol 2-acetamido-2-deoxy-alpha-D-glucopyranoside (GlcNAc-Ins) in the mycothiol biosynthesis pathway. The protein is 1D-myo-inositol 2-acetamido-2-deoxy-alpha-D-glucopyranoside deacetylase of Acidothermus cellulolyticus (strain ATCC 43068 / DSM 8971 / 11B).